The primary structure comprises 176 residues: Large ribosomal subunit protein eL20 (176 aa).

This sequence belongs to the eukaryotic ribosomal protein eL20 family. In terms of assembly, component of the large ribosomal subunit.

It localises to the cytoplasm. In terms of biological role, component of the large ribosomal subunit. The ribosome is a large ribonucleoprotein complex responsible for the synthesis of proteins in the cell. This chain is Large ribosomal subunit protein eL20 (rpl18a), found in Ictalurus punctatus (Channel catfish).